The sequence spans 40 residues: Photosystem II reaction center protein J (40 aa).

The chain crosses the membrane as a helical span at residues 8-28; the sequence is IPLWLIGTVAGILVLGLLGIF.

This sequence belongs to the PsbJ family. PSII is composed of 1 copy each of membrane proteins PsbA, PsbB, PsbC, PsbD, PsbE, PsbF, PsbH, PsbI, PsbJ, PsbK, PsbL, PsbM, PsbT, PsbX, PsbY, PsbZ, Psb30/Ycf12, at least 3 peripheral proteins of the oxygen-evolving complex and a large number of cofactors. It forms dimeric complexes.

Its subcellular location is the plastid. It localises to the chloroplast thylakoid membrane. Functionally, one of the components of the core complex of photosystem II (PSII). PSII is a light-driven water:plastoquinone oxidoreductase that uses light energy to abstract electrons from H(2)O, generating O(2) and a proton gradient subsequently used for ATP formation. It consists of a core antenna complex that captures photons, and an electron transfer chain that converts photonic excitation into a charge separation. The sequence is that of Photosystem II reaction center protein J from Physcomitrium patens (Spreading-leaved earth moss).